The primary structure comprises 306 residues: Putative dihydroorotate dehydrogenase A (fumarate) (306 aa).

Residues Ser-24 and 48-49 (KS) each bind FMN. Substrate contacts are provided by residues Lys-48, 72–76 (NAVGL), and Asn-129. FMN is bound at residue Asn-129. The active-site Nucleophile is the Cys-132. Residues Lys-167 and Ile-192 each contribute to the FMN site. 193–194 (NS) lines the substrate pocket. Residues Gly-218 and 244–245 (GG) each bind FMN.

This sequence belongs to the dihydroorotate dehydrogenase family. Type 1 subfamily. As to quaternary structure, homodimer. FMN serves as cofactor.

The protein localises to the cytoplasm. The enzyme catalyses (S)-dihydroorotate + fumarate = orotate + succinate. Its pathway is pyrimidine metabolism; UMP biosynthesis via de novo pathway. Catalyzes the conversion of dihydroorotate to orotate with fumarate as the electron acceptor. The protein is Putative dihydroorotate dehydrogenase A (fumarate) (pyrD) of Aeropyrum pernix (strain ATCC 700893 / DSM 11879 / JCM 9820 / NBRC 100138 / K1).